The chain runs to 788 residues: Cadherin-10 (788 aa).

Residues 1–22 (MTIHQFLLLFLFWVCLPHFCSP) form the signal peptide. A propeptide spanning residues 23–54 (EIMFRRTPVPQQRILSSRVPRSDGKILHRQKR) is cleaved from the precursor. Cadherin domains are found at residues 55–160 (GWMW…EPTF), 161–269 (PEEI…PPRF), 270–384 (PQNT…PPVF), 385–487 (SRSS…DNAP), and 488–606 (QFAV…LLLP). Topologically, residues 55 to 613 (GWMWNQFFLL…LLPAGLSTGA (559 aa)) are extracellular. The N-linked (GlcNAc...) asparagine glycan is linked to Asn-256. N-linked (GlcNAc...) asparagine glycans are attached at residues Asn-438, Asn-456, and Asn-534. Residues 614–634 (LIAILLCIIILLVIVVLFAAL) traverse the membrane as a helical segment. At 635-788 (KRQRKKEPLI…YGGGESDKDS (154 aa)) the chain is on the cytoplasmic side. Ser-784 and Ser-788 each carry phosphoserine.

Predominantly expressed in brain. Also found in adult and fetal kidney. Very low levels detected in prostate and fetal lung.

The protein resides in the cell membrane. Its function is as follows. Cadherins are calcium-dependent cell adhesion proteins. They preferentially interact with themselves in a homophilic manner in connecting cells; cadherins may thus contribute to the sorting of heterogeneous cell types. In Homo sapiens (Human), this protein is Cadherin-10 (CDH10).